A 302-amino-acid chain; its full sequence is Meiotically up-regulated gene 129 protein (302 aa).

Functionally, has a role in meiosis. This chain is Meiotically up-regulated gene 129 protein (mug129), found in Schizosaccharomyces pombe (strain 972 / ATCC 24843) (Fission yeast).